The following is a 281-amino-acid chain: uncharacterized protein (281 aa).

A run of 4 helical transmembrane segments spans residues 8 to 28, 97 to 117, 147 to 167, and 210 to 230; these read ALPVVAIVALVASGVITFIWS, LAVALHGLGLSVLLFDYRGYG, PARIAYFGESLGAAVAVGLAV, and IASVHAPVLVIAGGSDDIVPA.

It to S.pombe bem46 and yeast YNL320w.

The protein localises to the cell membrane. This is an uncharacterized protein from Mycobacterium tuberculosis (strain CDC 1551 / Oshkosh).